The sequence spans 392 residues: Succinyl-diaminopimelate desuccinylase (392 aa).

Residue histidine 78 coordinates Zn(2+). Aspartate 80 is an active-site residue. A Zn(2+)-binding site is contributed by aspartate 110. The active-site Proton acceptor is glutamate 145. Glutamate 146, glutamate 174, and histidine 363 together coordinate Zn(2+).

The protein belongs to the peptidase M20A family. DapE subfamily. As to quaternary structure, homodimer. The cofactor is Zn(2+). Co(2+) serves as cofactor.

The catalysed reaction is N-succinyl-(2S,6S)-2,6-diaminopimelate + H2O = (2S,6S)-2,6-diaminopimelate + succinate. It participates in amino-acid biosynthesis; L-lysine biosynthesis via DAP pathway; LL-2,6-diaminopimelate from (S)-tetrahydrodipicolinate (succinylase route): step 3/3. Functionally, catalyzes the hydrolysis of N-succinyl-L,L-diaminopimelic acid (SDAP), forming succinate and LL-2,6-diaminopimelate (DAP), an intermediate involved in the bacterial biosynthesis of lysine and meso-diaminopimelic acid, an essential component of bacterial cell walls. In Methylobacterium radiotolerans (strain ATCC 27329 / DSM 1819 / JCM 2831 / NBRC 15690 / NCIMB 10815 / 0-1), this protein is Succinyl-diaminopimelate desuccinylase.